The following is a 698-amino-acid chain: tRNA (guanine(37)-N(1))-methyltransferase (698 aa).

A disordered region spans residues 233-254 (DSTAHDSVQRNEGKTPKGPLDG). Residues 234–247 (STAHDSVQRNEGKT) are compositionally biased toward basic and acidic residues. Residues Arg-394, 432–433 (DI), and 459–460 (DA) each bind S-adenosyl-L-methionine. 2 disordered regions span residues 500 to 522 (PDQN…GHVD) and 534 to 582 (KKKL…DAPR). 3 stretches are compositionally biased toward basic and acidic residues: residues 513–522 (RESDRVGHVD), 539–550 (HADTNDPLEERP), and 569–582 (TNND…DAPR). S-adenosyl-L-methionine is bound at residue Asn-603.

This sequence belongs to the class I-like SAM-binding methyltransferase superfamily. TRM5/TYW2 family. As to quaternary structure, monomer.

It is found in the mitochondrion matrix. The protein localises to the nucleus. Its subcellular location is the cytoplasm. It carries out the reaction guanosine(37) in tRNA + S-adenosyl-L-methionine = N(1)-methylguanosine(37) in tRNA + S-adenosyl-L-homocysteine + H(+). Its function is as follows. Specifically methylates the N1 position of guanosine-37 in various cytoplasmic and mitochondrial tRNAs. Methylation is not dependent on the nature of the nucleoside 5' of the target nucleoside. This is the first step in the biosynthesis of wybutosine (yW), a modified base adjacent to the anticodon of tRNAs and required for accurate decoding. In Plasmodium knowlesi (strain H), this protein is tRNA (guanine(37)-N(1))-methyltransferase.